The chain runs to 312 residues: Glyoxylate/hydroxypyruvate reductase A (312 aa).

Residue Arg227 is part of the active site. The active-site Proton donor is His275.

It belongs to the D-isomer specific 2-hydroxyacid dehydrogenase family. GhrA subfamily.

The protein resides in the cytoplasm. The catalysed reaction is glycolate + NADP(+) = glyoxylate + NADPH + H(+). It carries out the reaction (R)-glycerate + NAD(+) = 3-hydroxypyruvate + NADH + H(+). The enzyme catalyses (R)-glycerate + NADP(+) = 3-hydroxypyruvate + NADPH + H(+). Catalyzes the NADPH-dependent reduction of glyoxylate and hydroxypyruvate into glycolate and glycerate, respectively. This is Glyoxylate/hydroxypyruvate reductase A from Escherichia coli (strain UTI89 / UPEC).